The sequence spans 313 residues: UDP-glucose 4-epimerase (313 aa).

NAD(+)-binding positions include 11–12, 31–36, 56–57, and 77–81; these read FI, DDLSSG, DI, and LAAQI. The substrate site is built by S121 and Y146. NAD(+) is bound by residues Y146 and K150. Y146 serves as the catalytic Proton acceptor. Residues N175, 189-190, 204-206, R213, and 271-274 each bind substrate; these read VV, KIF, and RLGD.

It belongs to the NAD(P)-dependent epimerase/dehydratase family. As to quaternary structure, homodimer. The cofactor is NAD(+).

It carries out the reaction UDP-alpha-D-glucose = UDP-alpha-D-galactose. The protein operates within carbohydrate metabolism; galactose metabolism. Functionally, involved in the metabolism of galactose. Catalyzes the conversion of UDP-galactose (UDP-Gal) to UDP-glucose (UDP-Glc) through a mechanism involving the transient reduction of NAD. The protein is UDP-glucose 4-epimerase of Mycolicibacterium smegmatis (strain ATCC 700084 / mc(2)155) (Mycobacterium smegmatis).